Here is a 521-residue protein sequence, read N- to C-terminus: Interleukin-9 receptor (521 aa).

The first 40 residues, 1–40 (MGLGRCIWEGWTLESEALRRDMGTWLLACICICTCVCLGV), serve as a signal peptide directing secretion. Over 41 to 270 (SVTGEGQGPR…GPLIPPWGWP (230 aa)) the chain is Extracellular. 2 N-linked (GlcNAc...) asparagine glycosylation sites follow: Asn-117 and Asn-156. In terms of domain architecture, Fibronectin type-III spans 149 to 259 (PPSDLQSNIS…QPVCFQAPQR (111 aa)). A WSXWS motif motif is present at residues 245–249 (WSEWS). Residues 271–291 (GNTLVAVSIFLLLTGPTYLLF) form a helical membrane-spanning segment. At 292–521 (KLSPRVKRIF…VLSKARSWTF (230 aa)) the chain is on the cytoplasmic side. Residues 301 to 309 (FYQNVPSPA) carry the Box 1 motif motif. The interval 413-439 (WAPTSLTRPAPPDSEGSRSSSSSSSSN) is disordered. Over residues 429–439 (SRSSSSSSSSN) the composition is skewed to low complexity.

Belongs to the type I cytokine receptor family. Type 4 subfamily. In terms of assembly, interacts with IL9.

It is found in the cell membrane. The protein localises to the secreted. In terms of biological role, plays an important role in the immune response against parasites by acting as a receptor of IL9. The polypeptide is Interleukin-9 receptor (IL9R) (Homo sapiens (Human)).